The chain runs to 227 residues: 2-C-methyl-D-erythritol 4-phosphate cytidylyltransferase (227 aa).

The protein belongs to the IspD/TarI cytidylyltransferase family. IspD subfamily.

It carries out the reaction 2-C-methyl-D-erythritol 4-phosphate + CTP + H(+) = 4-CDP-2-C-methyl-D-erythritol + diphosphate. It participates in isoprenoid biosynthesis; isopentenyl diphosphate biosynthesis via DXP pathway; isopentenyl diphosphate from 1-deoxy-D-xylulose 5-phosphate: step 2/6. In terms of biological role, catalyzes the formation of 4-diphosphocytidyl-2-C-methyl-D-erythritol from CTP and 2-C-methyl-D-erythritol 4-phosphate (MEP). This is 2-C-methyl-D-erythritol 4-phosphate cytidylyltransferase from Thermosipho melanesiensis (strain DSM 12029 / CIP 104789 / BI429).